Consider the following 448-residue polypeptide: UDP-N-acetylmuramoylalanine--D-glutamate ligase (448 aa).

112–118 (GSNAKST) serves as a coordination point for ATP.

This sequence belongs to the MurCDEF family.

It is found in the cytoplasm. It catalyses the reaction UDP-N-acetyl-alpha-D-muramoyl-L-alanine + D-glutamate + ATP = UDP-N-acetyl-alpha-D-muramoyl-L-alanyl-D-glutamate + ADP + phosphate + H(+). The protein operates within cell wall biogenesis; peptidoglycan biosynthesis. Its function is as follows. Cell wall formation. Catalyzes the addition of glutamate to the nucleotide precursor UDP-N-acetylmuramoyl-L-alanine (UMA). The polypeptide is UDP-N-acetylmuramoylalanine--D-glutamate ligase (Acinetobacter baumannii (strain ATCC 17978 / DSM 105126 / CIP 53.77 / LMG 1025 / NCDC KC755 / 5377)).